The chain runs to 369 residues: 3-dehydroquinate synthase (369 aa).

NAD(+) is bound by residues 80–85, 114–118, 138–139, Lys151, Lys160, and 178–181; these read DGEQYK, GVIGD, TT, and TLKT. 3 residues coordinate Zn(2+): Glu193, His256, and His273.

This sequence belongs to the sugar phosphate cyclases superfamily. Dehydroquinate synthase family. Co(2+) serves as cofactor. The cofactor is Zn(2+). NAD(+) is required as a cofactor.

It is found in the cytoplasm. The catalysed reaction is 7-phospho-2-dehydro-3-deoxy-D-arabino-heptonate = 3-dehydroquinate + phosphate. The protein operates within metabolic intermediate biosynthesis; chorismate biosynthesis; chorismate from D-erythrose 4-phosphate and phosphoenolpyruvate: step 2/7. In terms of biological role, catalyzes the conversion of 3-deoxy-D-arabino-heptulosonate 7-phosphate (DAHP) to dehydroquinate (DHQ). The protein is 3-dehydroquinate synthase of Psychrobacter cryohalolentis (strain ATCC BAA-1226 / DSM 17306 / VKM B-2378 / K5).